A 128-amino-acid polypeptide reads, in one-letter code: Disintegrin EO4A (128 aa).

A signal peptide spans 1 to 20 (MIPVLLVTICLAVFPFQGSS). The propeptide occupies 21 to 47 (IILESGNINDYEIVYPKKVNVLPTGAM). In terms of domain architecture, Disintegrin spans 26–112 (GNINDYEIVY…DCPRNPYKGK (87 aa)). 4 disulfides stabilise this stretch: cysteine 53–cysteine 76, cysteine 67–cysteine 73, cysteine 72–cysteine 97, and cysteine 85–cysteine 104. Positions 89–91 (RGD) match the Cell attachment site motif. The propeptide occupies 115 to 128 (PMKWPAAAKGSVLM).

This sequence belongs to the disintegrin family. Dimeric disintegrin subfamily. Heterodimer with EO5B; disulfide-linked. In terms of tissue distribution, expressed by the venom gland.

The protein resides in the secreted. In terms of biological role, poor inhibitor of platelet aggregation. The disintegrin inhibits the adhesion of cells expressing the RGD-dependent integrin alpha-5/beta-1 (ITGA5/ITGB1) to immobilized fibronectin. Inhibition on alpha-2b/beta-3 (ITGA2B/ITGB3) is low. This Echis ocellatus (Ocellated saw-scaled viper) protein is Disintegrin EO4A.